The following is a 133-amino-acid chain: Glycophorin-A (133 aa).

O-linked (GalNAc...) threonine glycans are attached at residues Thr1 and Thr6. The interval 1 to 34 is disordered; the sequence is TETPVTGEQGSATPGNVSNATVTAGKPSATSPGV. Over 1–62 the chain is Extracellular; sequence TETPVTGEQG…SYHQDFSHAE (62 aa). Residue Ser11 is glycosylated (O-linked (GalNAc...) serine). The O-linked (GalNAc...) threonine glycan is linked to Thr13. A glycan (N-linked (GlcNAc...) asparagine) is linked at Asn19. O-linked (GalNAc...) threonine glycosylation is found at Thr21, Thr23, and Thr30. Ser31 carries O-linked (GalNAc...) serine glycosylation. Asn39 carries N-linked (GlcNAc...) asparagine glycosylation. Residues Thr41 and Thr48 are each glycosylated (O-linked (GalNAc...) threonine). Residues 63–85 traverse the membrane as a helical segment; it reads ITGIIFAVMAGLLLIIFLIAYLI. The Cytoplasmic segment spans residues 86 to 133; that stretch reads RRMIKKPLPVPKPQDSPDIGTENTADPSELQDTEDPPLTSVEIETPAS. The disordered stretch occupies residues 93 to 133; that stretch reads LPVPKPQDSPDIGTENTADPSELQDTEDPPLTSVEIETPAS.

Belongs to the glycophorin-A family. As to quaternary structure, homodimer. Component of the ankyrin-1 complex in the erythrocyte, composed of ANK1, RHCE, RHAG, SLC4A1, EPB42, GYPA, GYPB and AQP1. Interacts with SLC4A1; a GYPA monomer is bound at each end of the SLC4A1 dimer forming a heterotetramer.

The protein localises to the membrane. In terms of biological role, component of the ankyrin-1 complex, a multiprotein complex involved in the stability and shape of the erythrocyte membrane. Glycophorin A is the major intrinsic membrane protein of the erythrocyte. The N-terminal glycosylated segment, which lies outside the erythrocyte membrane, has MN blood group receptors. Appears to be important for the function of SLC4A1 and is required for high activity of SLC4A1. May be involved in translocation of SLC4A1 to the plasma membrane. The protein is Glycophorin-A of Sus scrofa (Pig).